A 217-amino-acid polypeptide reads, in one-letter code: Large ribosomal subunit protein uL4 (217 aa).

The interval 42–100 (RAAARQGTHSTKTRGDVSGGGRKPYRQKGTGRARQGSTRAPQFTGGGVVHGPKPRDYSQ) is disordered.

Belongs to the universal ribosomal protein uL4 family. Part of the 50S ribosomal subunit.

Functionally, one of the primary rRNA binding proteins, this protein initially binds near the 5'-end of the 23S rRNA. It is important during the early stages of 50S assembly. It makes multiple contacts with different domains of the 23S rRNA in the assembled 50S subunit and ribosome. Forms part of the polypeptide exit tunnel. The polypeptide is Large ribosomal subunit protein uL4 (Mycolicibacterium paratuberculosis (strain ATCC BAA-968 / K-10) (Mycobacterium paratuberculosis)).